The sequence spans 210 residues: Uridine kinase (210 aa).

Gly-12–Thr-19 contributes to the ATP binding site.

This sequence belongs to the uridine kinase family.

It is found in the cytoplasm. The enzyme catalyses uridine + ATP = UMP + ADP + H(+). It catalyses the reaction cytidine + ATP = CMP + ADP + H(+). It participates in pyrimidine metabolism; CTP biosynthesis via salvage pathway; CTP from cytidine: step 1/3. The protein operates within pyrimidine metabolism; UMP biosynthesis via salvage pathway; UMP from uridine: step 1/1. In Streptococcus uberis (strain ATCC BAA-854 / 0140J), this protein is Uridine kinase.